A 542-amino-acid chain; its full sequence is TOM1-like protein 7 (542 aa).

The 130-residue stretch at 29–158 (ATSELLRTPD…ELKRCGVKFP (130 aa)) folds into the VHS domain. Position 161 is a phosphoserine (Ser-161). Positions 201–289 (EIESLSLSSL…VLARHDAIAS (89 aa)) constitute a GAT domain. The interval 303–340 (RETSSSLKTCGAAALESADSESSSSSSSSESETDEVED) is disordered. Residues 314–332 (AAALESADSESSSSSSSSE) show a composition bias toward low complexity. At Ser-521 the chain carries Phosphoserine. A disordered region spans residues 522 to 542 (FPARATGTSGAATAATVDRQP). A compositionally biased stretch (low complexity) spans 524–542 (ARATGTSGAATAATVDRQP).

It belongs to the TOM1 family. As to expression, preferentially expressed in flowers.

The protein localises to the membrane. Its function is as follows. Might contribute to the loading of the ESCRT machinery. The polypeptide is TOM1-like protein 7 (Arabidopsis thaliana (Mouse-ear cress)).